Consider the following 832-residue polypeptide: Putative beta-glucosidase (832 aa).

The active site involves aspartate 225. The 160-residue stretch at 397 to 556 folds into the PA14 domain; sequence TGKHGYVAKF…DPETEIDYAV (160 aa).

The protein belongs to the glycosyl hydrolase 3 family.

The protein resides in the cytoplasm. It catalyses the reaction Hydrolysis of terminal, non-reducing beta-D-glucosyl residues with release of beta-D-glucose.. This Schizosaccharomyces pombe (strain 972 / ATCC 24843) (Fission yeast) protein is Putative beta-glucosidase.